The primary structure comprises 141 residues: Sec-independent protein translocase protein TatB (141 aa).

Residues 1–21 (MFGISFSELLLVGLVALLVLG) traverse the membrane as a helical segment. The tract at residues 74–141 (EAQKLLAPLT…SPPSETPRNP (68 aa)) is disordered. Residues 89 to 115 (QETPPPAAESPAPSVPTPPPTSTPAVP) are compositionally biased toward pro residues. Residues 116–129 (PADAAAPPAVAAST) are compositionally biased toward low complexity. Residues 130-141 (PPSPPSETPRNP) show a composition bias toward pro residues.

The protein belongs to the TatB family. The Tat system comprises two distinct complexes: a TatABC complex, containing multiple copies of TatA, TatB and TatC subunits, and a separate TatA complex, containing only TatA subunits. Substrates initially bind to the TatABC complex, which probably triggers association of the separate TatA complex to form the active translocon.

The protein resides in the cell inner membrane. Its function is as follows. Part of the twin-arginine translocation (Tat) system that transports large folded proteins containing a characteristic twin-arginine motif in their signal peptide across membranes. Together with TatC, TatB is part of a receptor directly interacting with Tat signal peptides. TatB may form an oligomeric binding site that transiently accommodates folded Tat precursor proteins before their translocation. In Pseudomonas aeruginosa (strain ATCC 15692 / DSM 22644 / CIP 104116 / JCM 14847 / LMG 12228 / 1C / PRS 101 / PAO1), this protein is Sec-independent protein translocase protein TatB.